Here is a 415-residue protein sequence, read N- to C-terminus: MGKIFIIDVTNRDGVQTARLGLSKLEKTLINIYLDEMGIFQSEFGFPTTKHERGYVEANLELAKMGVIKNLRLEGWIRAIVADVDLAFRRAPSLKHLNLSISTSEQMINGKFQGRKVFKDIIEDMTIAVNAAYAKGAETVGVNAEDASRTSIVNLIEFGKAAKEVGATRLRYCDTLGYDNPFTIYETARTLAEKVGMPIEIHCHGDLGMAIGNSLAGAKGVIDGGQDVYVNTTVNGIGERAGNADLVAFLLAILKSKGFGEKYQLGHEVDLSKAWKIARFASYAFDVEIPINQPGVGRNCFAHASGIHADGVIKDSQNYELYGYEELGRGEALMVETGREICAGQYSGISGFRHVMGNMSVELPEDKDEANKILELVRYANVEAHKPLVEDELIFIAKYPEISRRLLTLTPLMND.

One can recognise a Pyruvate carboxyltransferase domain in the interval 4–275 (IFIIDVTNRD…GHEVDLSKAW (272 aa)).

This sequence belongs to the alpha-IPM synthase/homocitrate synthase family. It depends on Mn(2+) as a cofactor.

It catalyses the reaction oxaloacetate + acetyl-CoA + H2O = citrate + CoA + H(+). Inhibited by citrate and under aerobic conditions. In terms of biological role, catalyzes the condensation of the acetyl group of acetyl coenzyme A (acetyl-CoA) with oxaloacetate to form citrate. This enzyme is highly Re-face stereospecific with respect to the C-2 of oxaloacetate. This is Citrate (Re)-synthase from Dehalococcoides mccartyi (strain CBDB1).